The following is a 341-amino-acid chain: UDP-N-acetylenolpyruvoylglucosamine reductase (341 aa).

The region spanning 12–182 (LSAYAKRLDI…ISVGLLLKKN (171 aa)) is the FAD-binding PCMH-type domain. Arginine 158 is an active-site residue. The Proton donor role is filled by serine 228. Residue glutamate 324 is part of the active site.

This sequence belongs to the MurB family. FAD is required as a cofactor.

The protein localises to the cytoplasm. The enzyme catalyses UDP-N-acetyl-alpha-D-muramate + NADP(+) = UDP-N-acetyl-3-O-(1-carboxyvinyl)-alpha-D-glucosamine + NADPH + H(+). The protein operates within cell wall biogenesis; peptidoglycan biosynthesis. Functionally, cell wall formation. This chain is UDP-N-acetylenolpyruvoylglucosamine reductase, found in Photorhabdus laumondii subsp. laumondii (strain DSM 15139 / CIP 105565 / TT01) (Photorhabdus luminescens subsp. laumondii).